The chain runs to 493 residues: Cysteine--tRNA ligase (493 aa).

C29 contributes to the Zn(2+) binding site. Positions 31 to 41 (VTVYDLSHIGH) match the 'HIGH' region motif. The Zn(2+) site is built by C209, H234, and E238. Residues 266-270 (KMSKS) carry the 'KMSKS' region motif. ATP is bound at residue K269.

It belongs to the class-I aminoacyl-tRNA synthetase family. As to quaternary structure, monomer. Zn(2+) serves as cofactor.

The protein resides in the cytoplasm. The catalysed reaction is tRNA(Cys) + L-cysteine + ATP = L-cysteinyl-tRNA(Cys) + AMP + diphosphate. The protein is Cysteine--tRNA ligase of Syntrophobacter fumaroxidans (strain DSM 10017 / MPOB).